Reading from the N-terminus, the 492-residue chain is Phosphatidylglycerol--prolipoprotein diacylglyceryl transferase (492 aa).

The next 9 helical transmembrane spans lie at Ile40–Trp60, Ala72–Pro92, Val106–Ala126, Ala133–Leu153, Gln184–Leu204, Ile214–Leu234, Val361–Ile381, Gly409–Ile429, and Leu441–Ile461. Arg230 contacts a 1,2-diacyl-sn-glycero-3-phospho-(1'-sn-glycerol).

It belongs to the Lgt family.

The protein resides in the cell inner membrane. The enzyme catalyses L-cysteinyl-[prolipoprotein] + a 1,2-diacyl-sn-glycero-3-phospho-(1'-sn-glycerol) = an S-1,2-diacyl-sn-glyceryl-L-cysteinyl-[prolipoprotein] + sn-glycerol 1-phosphate + H(+). It functions in the pathway protein modification; lipoprotein biosynthesis (diacylglyceryl transfer). Functionally, catalyzes the transfer of the diacylglyceryl group from phosphatidylglycerol to the sulfhydryl group of the N-terminal cysteine of a prolipoprotein, the first step in the formation of mature lipoproteins. The protein is Phosphatidylglycerol--prolipoprotein diacylglyceryl transferase of Rhodopirellula baltica (strain DSM 10527 / NCIMB 13988 / SH1).